A 353-amino-acid chain; its full sequence is S-adenosylmethionine:tRNA ribosyltransferase-isomerase (353 aa).

It belongs to the QueA family. In terms of assembly, monomer.

The protein localises to the cytoplasm. The enzyme catalyses 7-aminomethyl-7-carbaguanosine(34) in tRNA + S-adenosyl-L-methionine = epoxyqueuosine(34) in tRNA + adenine + L-methionine + 2 H(+). The protein operates within tRNA modification; tRNA-queuosine biosynthesis. Its function is as follows. Transfers and isomerizes the ribose moiety from AdoMet to the 7-aminomethyl group of 7-deazaguanine (preQ1-tRNA) to give epoxyqueuosine (oQ-tRNA). This Paraburkholderia phymatum (strain DSM 17167 / CIP 108236 / LMG 21445 / STM815) (Burkholderia phymatum) protein is S-adenosylmethionine:tRNA ribosyltransferase-isomerase.